Consider the following 206-residue polypeptide: Ras-related protein RABG3f (206 aa).

15–23 (GDSGVGKTS) serves as a coordination point for GTP. An Effector region motif is present at residues 37 to 45 (YKATIGADF). GTP contacts are provided by residues 63–67 (DTAGQ), 125–128 (NKVD), and 158–159 (SA). S-geranylgeranyl cysteine attachment occurs at residues Cys-204 and Cys-206. The residue at position 206 (Cys-206) is a Cysteine methyl ester.

Belongs to the small GTPase superfamily. Rab family. In terms of assembly, interacts with VPS35A.

The protein localises to the endosome membrane. It localises to the vacuole membrane. The protein resides in the prevacuolar compartment membrane. With respect to regulation, regulated by guanine nucleotide exchange factors (GEFs) which promote the exchange of bound GDP for free GTP. Regulated by the MON1-CCZ1 complex which serves as a link between Rab5 and Rab7 protein families in PVCs and mediates PVC maturation. Its function is as follows. Essential for trafficking from prevacuolar compartments to vacuoles. Involved in the trafficking of newly synthesized protein to vacuoles. Essential for plant growth. Participates in the recruitment of the core retromer components to the endosomal membrane by interacting with VPS35A. The protein is Ras-related protein RABG3f (RABG3F) of Arabidopsis thaliana (Mouse-ear cress).